A 414-amino-acid chain; its full sequence is Serine/threonine transporter SstT (414 aa).

Helical transmembrane passes span 16 to 36 (GSLV…AWIS), 46 to 66 (LGTL…LMLV), 84 to 104 (ILFL…VFSF), 143 to 163 (ALLN…GFAL), 180 to 200 (AVTF…FGLV), 219 to 239 (LVVL…LLVF), 300 to 320 (MAGA…TLGV), and 332 to 352 (VVAS…LLLI).

This sequence belongs to the dicarboxylate/amino acid:cation symporter (DAACS) (TC 2.A.23) family.

It is found in the cell inner membrane. It catalyses the reaction L-serine(in) + Na(+)(in) = L-serine(out) + Na(+)(out). The enzyme catalyses L-threonine(in) + Na(+)(in) = L-threonine(out) + Na(+)(out). Involved in the import of serine and threonine into the cell, with the concomitant import of sodium (symport system). The sequence is that of Serine/threonine transporter SstT from Salmonella heidelberg (strain SL476).